The chain runs to 355 residues: Olfactory receptor 1I1 (355 aa).

At 1-25 (MEPEKQTEISEFFLQGLSEKPEHQT) the chain is on the extracellular side. A helical transmembrane segment spans residues 26-49 (LLFTMFLSTYLVTIIGNALIILAI). Over 50 to 57 (ITDSHLHT) the chain is Cytoplasmic. The helical transmembrane segment at 58–79 (PMYFFLFNLSLVDTLLSSTTVP) threads the bilayer. Over 80-100 (KMLANIQAQSRAIPFVGCLTQ) the chain is Extracellular. Residues 101 to 120 (MYAFHLFGTMDSFLLAVMAI) traverse the membrane as a helical segment. At 121–139 (DRFVAIVHPQRYLVLMCSP) the chain is on the cytoplasmic side. A helical transmembrane segment spans residues 140–158 (VCGLLLGASWMITNLQSLI). Residues 159-195 (HTCLMAQLTFCAGSEISHFFCDLMPLLKLSGSDTHTN) lie on the Extracellular side of the membrane. Residues 196–219 (ELVIFAFGIVVGTSPFSCILLSYI) form a helical membrane-spanning segment. Residues 220 to 236 (RIFWTVFKIPSTRGKWK) are Cytoplasmic-facing. A helical transmembrane segment spans residues 237–259 (AFSTCGLHLTVVSLSYGTIFAVY). Over 260 to 272 (LQPTSPSSSQKDK) the chain is Extracellular. Residues 273-292 (AAALMCGVFIPMLNPFIYSI) traverse the membrane as a helical segment. Residues 293-355 (RNKDMKAALG…QSLAGNRDME (63 aa)) lie on the Cytoplasmic side of the membrane.

Belongs to the G-protein coupled receptor 1 family.

It localises to the cell membrane. Its function is as follows. Odorant receptor. The protein is Olfactory receptor 1I1 (OR1I1) of Homo sapiens (Human).